The sequence spans 318 residues: tRNA-cytidine(32) 2-sulfurtransferase (318 aa).

The short motif at 65–70 (SGGKDS) is the PP-loop motif element. Residues Cys140, Cys143, and Cys231 each coordinate [4Fe-4S] cluster.

The protein belongs to the TtcA family. Homodimer. Mg(2+) serves as cofactor. [4Fe-4S] cluster is required as a cofactor.

The protein resides in the cytoplasm. It carries out the reaction cytidine(32) in tRNA + S-sulfanyl-L-cysteinyl-[cysteine desulfurase] + AH2 + ATP = 2-thiocytidine(32) in tRNA + L-cysteinyl-[cysteine desulfurase] + A + AMP + diphosphate + H(+). It participates in tRNA modification. Catalyzes the ATP-dependent 2-thiolation of cytidine in position 32 of tRNA, to form 2-thiocytidine (s(2)C32). The sulfur atoms are provided by the cysteine/cysteine desulfurase (IscS) system. This chain is tRNA-cytidine(32) 2-sulfurtransferase, found in Herminiimonas arsenicoxydans.